Reading from the N-terminus, the 542-residue chain is Probable spastin homolog spas-1 (542 aa).

Positions 29-66 form a coiled coil; the sequence is RAAIEMDELTKQNGTINEKLQTAELYKQARQMLKEANE. The disordered stretch occupies residues 131-177; it reads ATVPGDKKVSKVKQTEKAPHVCSRGDRCGAHQPPPEKKSTPLKPVNQ. The span at 135–169 shows a compositional bias: basic and acidic residues; that stretch reads GDKKVSKVKQTEKAPHVCSRGDRCGAHQPPPEKKS. 309–316 is an ATP binding site; sequence GPPGNGKT.

It belongs to the AAA ATPase family. Spastin subfamily. As to quaternary structure, homohexamer. The homohexamer is stabilized by ATP-binding. The homohexamer may adopt a ring conformation through which microtubules pass prior to being severed. Interacts with microtubules.

The protein resides in the cytoplasm. The protein localises to the cytoskeleton. Its subcellular location is the perinuclear region. It catalyses the reaction n ATP + n H2O + a microtubule = n ADP + n phosphate + (n+1) alpha/beta tubulin heterodimers.. Its function is as follows. Severs microtubules, probably in an ATP-dependent fashion. This Caenorhabditis briggsae protein is Probable spastin homolog spas-1 (spas-1).